A 295-amino-acid polypeptide reads, in one-letter code: Glycine N-acyltransferase-like protein Keg1 (295 aa).

K41 is modified (N6-acetyllysine; alternate). Residue K41 is modified to N6-succinyllysine; alternate. At K43 the chain carries N6-acetyllysine. K48 is modified (N6-acetyllysine; alternate). K48 bears the N6-succinyllysine; alternate mark. N6-acetyllysine occurs at positions 80 and 83. An N6-acetyllysine; alternate mark is found at K124, K128, and K140. An N6-succinyllysine; alternate mark is found at K124, K128, and K140. N6-acetyllysine is present on K150. Position 255 is an N6-acetyllysine; alternate (K255). K255 is modified (N6-succinyllysine; alternate).

Belongs to the glycine N-acyltransferase family. As to quaternary structure, binds to microtubules. In terms of tissue distribution, specifically expressed in kidney and liver. Up-regulated in the regenerating liver as well as in hepatocellular carcinoma.

Its subcellular location is the cytoplasm. The protein resides in the cytoskeleton. The protein localises to the microtubule organizing center. It localises to the centrosome. The catalysed reaction is an acyl-CoA + glycine = an N-acylglycine + CoA + H(+). Its function is as follows. Acyltransferase which transfers the acyl group to the N-terminus of glycine. Can conjugate a multitude of substrates to form a variety of N-acylglycines. This chain is Glycine N-acyltransferase-like protein Keg1 (Keg1), found in Rattus norvegicus (Rat).